The primary structure comprises 360 residues: UDP-N-acetylglucosamine--N-acetylmuramyl-(pentapeptide) pyrophosphoryl-undecaprenol N-acetylglucosamine transferase (360 aa).

Residues 15–17 (TGG), Asn-128, Arg-164, Ser-192, Ile-247, and Gln-292 contribute to the UDP-N-acetyl-alpha-D-glucosamine site.

It belongs to the glycosyltransferase 28 family. MurG subfamily.

The protein resides in the cell inner membrane. The catalysed reaction is di-trans,octa-cis-undecaprenyl diphospho-N-acetyl-alpha-D-muramoyl-L-alanyl-D-glutamyl-meso-2,6-diaminopimeloyl-D-alanyl-D-alanine + UDP-N-acetyl-alpha-D-glucosamine = di-trans,octa-cis-undecaprenyl diphospho-[N-acetyl-alpha-D-glucosaminyl-(1-&gt;4)]-N-acetyl-alpha-D-muramoyl-L-alanyl-D-glutamyl-meso-2,6-diaminopimeloyl-D-alanyl-D-alanine + UDP + H(+). It functions in the pathway cell wall biogenesis; peptidoglycan biosynthesis. Cell wall formation. Catalyzes the transfer of a GlcNAc subunit on undecaprenyl-pyrophosphoryl-MurNAc-pentapeptide (lipid intermediate I) to form undecaprenyl-pyrophosphoryl-MurNAc-(pentapeptide)GlcNAc (lipid intermediate II). This is UDP-N-acetylglucosamine--N-acetylmuramyl-(pentapeptide) pyrophosphoryl-undecaprenol N-acetylglucosamine transferase from Blochmanniella floridana.